We begin with the raw amino-acid sequence, 152 residues long: MSQLCPCGSAVEYSLCCHPYVSGEKVAPDPEHLMRSRYCAFVMQDADYLIKTWHPSCGAAALRAELIAGFAHTEWLGLTVFEHCWQDADNIGFVSFVARFIEGGKTGAIIERSRFLKENGQWYYIDGTRPQFGRNDPCPCGSGKKIKKCCGQ.

It belongs to the UPF0225 family.

This chain is UPF0225 protein YchJ, found in Shigella dysenteriae serotype 1 (strain Sd197).